Reading from the N-terminus, the 359-residue chain is Peptide chain release factor 1 (359 aa).

Gln235 carries the N5-methylglutamine modification.

The protein belongs to the prokaryotic/mitochondrial release factor family. Post-translationally, methylated by PrmC. Methylation increases the termination efficiency of RF1.

Its subcellular location is the cytoplasm. In terms of biological role, peptide chain release factor 1 directs the termination of translation in response to the peptide chain termination codons UAG and UAA. The polypeptide is Peptide chain release factor 1 (Aromatoleum aromaticum (strain DSM 19018 / LMG 30748 / EbN1) (Azoarcus sp. (strain EbN1))).